Reading from the N-terminus, the 296-residue chain is Mycothiol acetyltransferase (296 aa).

N-acetyltransferase domains lie at 17-146 (YNHR…AVYD) and 156-296 (LKTA…VYEK). Glu44 provides a ligand contact to 1D-myo-inositol 2-(L-cysteinylamino)-2-deoxy-alpha-D-glucopyranoside. 81–83 (LAV) contacts acetyl-CoA. 1D-myo-inositol 2-(L-cysteinylamino)-2-deoxy-alpha-D-glucopyranoside is bound by residues Glu183, Lys222, and Glu230. Acetyl-CoA is bound by residues 234-236 (VGL) and 241-247 (RGKGLGD). Residue Tyr268 coordinates 1D-myo-inositol 2-(L-cysteinylamino)-2-deoxy-alpha-D-glucopyranoside.

It belongs to the acetyltransferase family. MshD subfamily. In terms of assembly, monomer.

It catalyses the reaction 1D-myo-inositol 2-(L-cysteinylamino)-2-deoxy-alpha-D-glucopyranoside + acetyl-CoA = mycothiol + CoA + H(+). Catalyzes the transfer of acetyl from acetyl-CoA to desacetylmycothiol (Cys-GlcN-Ins) to form mycothiol. The chain is Mycothiol acetyltransferase from Corynebacterium efficiens (strain DSM 44549 / YS-314 / AJ 12310 / JCM 11189 / NBRC 100395).